The sequence spans 947 residues: MSVLSKLMRAGEGKILRKLHRIADQVNSIEEDFADLSDAELRALTDEYKQRYADGESLDDLLPEAFATVREAAKRVLGQRHYDVQIMGGAALHMGYVAEMKTGEGKTLVGTLPAYLNALSGEGVHIVTVNDYLAERDSELMGRVHKFLGLNVGCILANQTPAQRREMYACDITYGTNNEFGFDYLRDNMAWSKDELVQRGHNFAIVDEVDSILVDEARTPLIISGPADQATKWYGDFAKLVTRLKKGEAGNTLKGIEETGDYEVDEKKRTVAIHESGVAKVEDWLGIDNLYESVNTPLVGYLNNAIKAKELFKKDKDYVVLDGEVMIVDEHTGRILAGRRYNEGMHQAIEAKEGVDIKDENQTLATITLQNFFRLYKRHDHDGKEQPGLSGMTGTAMTEAAEFHQIYKLGVVPIPTNRPMVRKDQSDLIYRTEVAKFEAVVDDIEEKHRKGQPILVGTTSVEKSEYLSQQLSKRGVQHEVLNAKQHDREATIVAQAGRKGSVTVATNMAGRGTDIKLGGNPEDLAEAELRQRGLDPEEHIEEWAAALPAALERAEQAVKAEFEEVKELGGLYVLGTERHESRRIDNQLRGRSGRQGDPGESRFYLSLGDDLMRLFKAQMVERVMSMANVPDDVPIENKMVTRAIASAQSQVETQNFETRKNVLKYDEVLNRQREVIYGERRRVLEGEDLQEQIQHFTNDTIDAYVQAETAEGFPEDWDLDRLWGAFKQLYPVKVTVEELEEAAGDRAGLTADYIAESIKDDVREQYEAREKQLGSEIMRELERRVVLSVLDRKWREHLYEMDYLQEGIGLRAMAQKDPLVEYQREGFDMFQAMMDGIKEESVGYLFNLEVQVEQQVEEVPVEDAAPSLDKGAQDAVPAQAGARPEIRAKGLDAPQRRDLHFSAPTVDGEGGVVEGEFTDGEPAQAQSDGLTRAERRKQAKGGRRRKK.

ATP contacts are provided by residues Gln-85, 103-107 (GEGKT), and Asp-514. The disordered stretch occupies residues 864 to 947 (AAPSLDKGAQ…QAKGGRRRKK (84 aa)). Basic and acidic residues predominate over residues 884-900 (PEIRAKGLDAPQRRDLH). Residues 934–947 (ERRKQAKGGRRRKK) are compositionally biased toward basic residues.

Belongs to the SecA family. As to quaternary structure, monomer and homodimer. Part of the essential Sec protein translocation apparatus which comprises SecA, SecYEG and auxiliary proteins SecDF. Other proteins may also be involved.

The protein localises to the cell membrane. It localises to the cytoplasm. It catalyses the reaction ATP + H2O + cellular proteinSide 1 = ADP + phosphate + cellular proteinSide 2.. In terms of biological role, part of the Sec protein translocase complex. Interacts with the SecYEG preprotein conducting channel. Has a central role in coupling the hydrolysis of ATP to the transfer of proteins into and across the cell membrane, serving as an ATP-driven molecular motor driving the stepwise translocation of polypeptide chains across the membrane. This Streptomyces lividans protein is Protein translocase subunit SecA.